The primary structure comprises 221 residues: Deoxyribose-phosphate aldolase (221 aa).

Catalysis depends on Asp-96, which acts as the Proton donor/acceptor. Lys-157 (schiff-base intermediate with acetaldehyde) is an active-site residue. The active-site Proton donor/acceptor is the Lys-185.

The protein belongs to the DeoC/FbaB aldolase family. DeoC type 1 subfamily.

It localises to the cytoplasm. The enzyme catalyses 2-deoxy-D-ribose 5-phosphate = D-glyceraldehyde 3-phosphate + acetaldehyde. It participates in carbohydrate degradation; 2-deoxy-D-ribose 1-phosphate degradation; D-glyceraldehyde 3-phosphate and acetaldehyde from 2-deoxy-alpha-D-ribose 1-phosphate: step 2/2. Catalyzes a reversible aldol reaction between acetaldehyde and D-glyceraldehyde 3-phosphate to generate 2-deoxy-D-ribose 5-phosphate. In Crocosphaera subtropica (strain ATCC 51142 / BH68) (Cyanothece sp. (strain ATCC 51142)), this protein is Deoxyribose-phosphate aldolase.